The primary structure comprises 512 residues: SNF1-related protein kinase catalytic subunit alpha KIN11 (512 aa).

Positions 20 to 272 constitute a Protein kinase domain; that stretch reads YKLGKTLGIG…IPEIRQHRWF (253 aa). ATP contacts are provided by residues 26–34 and K49; that span reads LGIGSFGKV. D143 acts as the Proton acceptor in catalysis. S165 carries the phosphoserine modification. T176 carries the post-translational modification Phosphothreonine; by GRIK1 or GRIK2. The auto-inhibitory domain (AID) stretch occupies residues 291–391; that stretch reads AKKINEEIVQ…GARSQVPVDR (101 aa). In terms of domain architecture, UBA spans 293-333; the sequence is KINEEIVQEVVNMGFDRNQVLESLRNRTQNDATVTYYLLLD. The interval 295–512 is regulatory domain (RD); the sequence is NEEIVQEVVN…AAFLTELRVI (218 aa). Positions 392–512 are PPI; that stretch reads KWALGLQSHA…AAFLTELRVI (121 aa). Residues 399–512 form an interaction with PAD1 and SKP1 region; it reads SHAHPREIMN…AAFLTELRVI (114 aa). In terms of domain architecture, KA1 spans 463–511; it reads AMTSPTVIKFELQLYKAREEKYLLDIQRVNGPQFLFLDLCAAFLTELRV.

The protein belongs to the protein kinase superfamily. CAMK Ser/Thr protein kinase family. SNF1 subfamily. Subunit of a probable heterotrimeric complex consisting of an alpha catalytic (KIN10 or KIN11) subunit, and a beta (KINB) and a gamma (KING or SNF4) non-catalytic regulatory subunits. Interacts with KINB2, KINB3, SNF4 and probably with KINB1 and KING1. Interacts with SKP1/ASK1, PAD1 and the N-terminus of PRL1. Potential subunit of a SCF ubiquitin ligase complex consisting of a SNF1-related protein kinase, SKP1 and CUL1. The association of the SCF complex with the proteasome may be mediated by PAD1 and seems to be inhibited by the interaction with PRL1. Interacts with DSP4. Interacts with the begomovirus AL2 protein and the curtovirus L2 protein. Interacts with ATAF1. Interacts with CIPK14. Interacts with FLZ proteins through their FLZ-type zinc finger domains. Interacts with GEBP/STKR1. Interacts with REM4.1 and REM4.2. Interacts with ADK2. Interacts with IDD8. Interacts with FLZ3, FLZ9, TCP3, TCP13, HB21/ZHD3 and HB23/ZHD10. Interacts with WRI1. Interacts with IPK2b. Interacts with FLZ6 and FLZ10. In terms of processing, sumoylated by SIZ1. Post-translationally, phosphorylated at Thr-176 under submergence. Autophosphorylated. Phosphorylated at Thr-176 by GRIK1/SNAK2 and GRIK2/SNAK1. Expressed in roots, shoots, flower buds, flowers, siliques and leaves. Restrictly expressed to the base of the leaf, the vascular tissue, and the hydathodes.

The protein localises to the plastid. It is found in the chloroplast. Its subcellular location is the cytoplasm. It localises to the endoplasmic reticulum. The catalysed reaction is L-seryl-[protein] + ATP = O-phospho-L-seryl-[protein] + ADP + H(+). It carries out the reaction L-threonyl-[protein] + ATP = O-phospho-L-threonyl-[protein] + ADP + H(+). Its activity is regulated as follows. Inactivated by the begomovirus AL2 protein or the curtovirus L2 protein. Activated by phosphorylation at Thr-176 by GRIK1/SNAK2 and GRIK2/SNAK1. Inhibited by trehalose-6-phosphate. Functionally, catalytic subunit of the probable trimeric SNF1-related protein kinase (SnRK) complex, a central regulator of cellular energy homeostasis, which, in response to seemingly unrelated darkness, sugar and stress conditions, activates energy-producing pathways and inhibits energy-consuming processes. May play a role in a signal transduction cascade regulating gene expression and carbohydrate metabolism in higher plants. The SnRK complex may also be involved in the regulation of fatty acid synthesis by phosphorylation of acetyl-CoA carboxylase and in assimilation of nitrogen by phosphorylating nitrate reductase. In vitro, KIN11 exhibits kinase activity on sucrose phosphate synthase and the kinase activity is inhibited by PRL1. May be a subunit of a SCF ubiquitin ligase complex and thus be involved in proteasomal ubiquitination. Involved in innate antiviral defenses. Phosphorylates REM4.1 in vitro. Phosphorylates ADK2 in vitro. The polypeptide is SNF1-related protein kinase catalytic subunit alpha KIN11 (Arabidopsis thaliana (Mouse-ear cress)).